The sequence spans 383 residues: Opsin Rh3 (383 aa).

Topologically, residues 1-57 (MESGNVSSSLFGNVSTALRPEARLSAETRLLGWNVPPEELRHIPEHWLTYPEPPESM) are extracellular. N13 carries an N-linked (GlcNAc...) asparagine glycan. A helical membrane pass occupies residues 58 to 82 (NYLLGTLYIFFTLMSMLGNGLVIWV). The Cytoplasmic portion of the chain corresponds to 83–94 (FSAAKSLRTPSN). The helical transmembrane segment at 95-119 (ILVINLAFCDFMMMVKTPIFIYNSF) threads the bilayer. Residues 120-133 (HQGYALGHLGCQIF) lie on the Extracellular side of the membrane. The cysteines at positions 130 and 207 are disulfide-linked. A helical membrane pass occupies residues 134–153 (GIIGSYTGIAAGATNAFIAY). Residues 154 to 171 (DRFNVITRPMEGKMTHGK) lie on the Cytoplasmic side of the membrane. Residues 172 to 196 (AIAMIIFIYMYATPWVVACYTETWG) traverse the membrane as a helical segment. The Extracellular portion of the chain corresponds to 197 to 220 (RFVPEGYLTSCTFDYLTDNFDTRL). A helical transmembrane segment spans residues 221–248 (FVACIFFFSFVCPTTMITYYYSQIVGHV). Over 249 to 284 (FSHEKALRDQAKKMNVESLRSNVDKNKETAEIRIAK) the chain is Cytoplasmic. A helical transmembrane segment spans residues 285-308 (AAITICFLFFCSWTPYGVMSLIGA). Residues 309-316 (FGDKTLLT) lie on the Extracellular side of the membrane. The chain crosses the membrane as a helical span at residues 317-341 (PGATMIPACACKMVACIDPFVYAIS). At K328 the chain carries N6-(retinylidene)lysine. Residues 342–383 (HPRYRMELQKRCPWLALNEKAPESSAVASTSTTQEPQQTTAA) lie on the Cytoplasmic side of the membrane. The disordered stretch occupies residues 362–383 (APESSAVASTSTTQEPQQTTAA). The segment covering 369–383 (ASTSTTQEPQQTTAA) has biased composition (low complexity).

This sequence belongs to the G-protein coupled receptor 1 family. Opsin subfamily. In terms of processing, phosphorylated on some or all of the serine and threonine residues present in the C-terminal region.

The protein localises to the membrane. In terms of biological role, visual pigments are the light-absorbing molecules that mediate vision. They consist of an apoprotein, opsin, covalently linked to cis-retinal. This is Opsin Rh3 (Rh3) from Drosophila melanogaster (Fruit fly).